The primary structure comprises 150 residues: Arginine repressor (150 aa).

This sequence belongs to the ArgR family.

The protein resides in the cytoplasm. It participates in amino-acid biosynthesis; L-arginine biosynthesis [regulation]. Its function is as follows. Regulates arginine biosynthesis genes. This is Arginine repressor from Staphylococcus haemolyticus (strain JCSC1435).